The following is a 389-amino-acid chain: 1-deoxy-D-xylulose 5-phosphate reductoisomerase (389 aa).

Positions 11, 12, 13, 14, 39, and 122 each coordinate NADPH. K123 serves as a coordination point for 1-deoxy-D-xylulose 5-phosphate. Position 124 (E124) interacts with NADPH. D148 is a binding site for Mn(2+). The 1-deoxy-D-xylulose 5-phosphate site is built by S149, E150, S174, and H197. A Mn(2+)-binding site is contributed by E150. Residue G203 coordinates NADPH. The 1-deoxy-D-xylulose 5-phosphate site is built by S210, N215, K216, and E219. Position 219 (E219) interacts with Mn(2+).

It belongs to the DXR family. It depends on Mg(2+) as a cofactor. The cofactor is Mn(2+).

The enzyme catalyses 2-C-methyl-D-erythritol 4-phosphate + NADP(+) = 1-deoxy-D-xylulose 5-phosphate + NADPH + H(+). It functions in the pathway isoprenoid biosynthesis; isopentenyl diphosphate biosynthesis via DXP pathway; isopentenyl diphosphate from 1-deoxy-D-xylulose 5-phosphate: step 1/6. Catalyzes the NADPH-dependent rearrangement and reduction of 1-deoxy-D-xylulose-5-phosphate (DXP) to 2-C-methyl-D-erythritol 4-phosphate (MEP). The sequence is that of 1-deoxy-D-xylulose 5-phosphate reductoisomerase from Leptospira borgpetersenii serovar Hardjo-bovis (strain JB197).